A 273-amino-acid polypeptide reads, in one-letter code: Cell division protein FtsQ (273 aa).

The Cytoplasmic segment spans residues 1–10; sequence MWNDARTINL. A helical membrane pass occupies residues 11–31; sequence IANTLAVLAVAAMLLAGVAWV. The Periplasmic portion of the chain corresponds to 32–273; that stretch reads AQRPYFTLAA…HSKSKPAKKR (242 aa). One can recognise a POTRA domain in the interval 37–110; it reads FTLAAIEIES…NTLRVRVEEQ (74 aa).

This sequence belongs to the FtsQ/DivIB family. FtsQ subfamily. In terms of assembly, part of a complex composed of FtsB, FtsL and FtsQ.

It is found in the cell inner membrane. In terms of biological role, essential cell division protein. May link together the upstream cell division proteins, which are predominantly cytoplasmic, with the downstream cell division proteins, which are predominantly periplasmic. May control correct divisome assembly. In Bordetella pertussis (strain Tohama I / ATCC BAA-589 / NCTC 13251), this protein is Cell division protein FtsQ.